The following is a 472-amino-acid chain: Uronate isomerase (472 aa).

The protein belongs to the metallo-dependent hydrolases superfamily. Uronate isomerase family.

It catalyses the reaction D-glucuronate = D-fructuronate. The enzyme catalyses aldehydo-D-galacturonate = keto-D-tagaturonate. It functions in the pathway carbohydrate metabolism; pentose and glucuronate interconversion. The chain is Uronate isomerase from Xanthomonas oryzae pv. oryzae (strain MAFF 311018).